A 449-amino-acid chain; its full sequence is UDP-N-acetylmuramoylalanine--D-glutamate ligase (449 aa).

An ATP-binding site is contributed by 113 to 119 (GTNGKTT).

It belongs to the MurCDEF family.

It localises to the cytoplasm. It catalyses the reaction UDP-N-acetyl-alpha-D-muramoyl-L-alanine + D-glutamate + ATP = UDP-N-acetyl-alpha-D-muramoyl-L-alanyl-D-glutamate + ADP + phosphate + H(+). It participates in cell wall biogenesis; peptidoglycan biosynthesis. Cell wall formation. Catalyzes the addition of glutamate to the nucleotide precursor UDP-N-acetylmuramoyl-L-alanine (UMA). This chain is UDP-N-acetylmuramoylalanine--D-glutamate ligase, found in Gloeothece citriformis (strain PCC 7424) (Cyanothece sp. (strain PCC 7424)).